Here is a 286-residue protein sequence, read N- to C-terminus: Main hemagglutinin component type C (286 aa).

Residues 2 to 55 (SQTNANDLRNNEVFFISPSNNTNKVLDKISQSEVKLWNKLSGANQKWRLIYDTN) form a 1-alpha repeat. Ricin B-type lectin domains are found at residues 12–140 (NEVF…FKFS) and 180–284 (DSSR…WIIN). One copy of the 1-beta repeat lies at 56-100 (KQAYKIKVMDNTSLILTWNAPLSSVSVKTDTNGDNQYWYLLQNYI). The 1-gamma repeat unit spans residues 101 to 148 (SRNVIIRNYMNPNLVLQYNIDDTLMVSTQTSSSNQFFKFSNCIYEALN). The 2-alpha repeat unit spans residues 149–193 (NRNCKLQTQLNSDRFLSKNLNSQIIVLWQWFDSSRQKWIIEYNET). Positions 167-183 (NLNSQIIVLWQWFDSSR) are sugar-binding site 1. The 2-beta repeat unit spans residues 194–239 (KSAYTLKCQENNRYLTWIQNSNNYVETYQSTDSLIQYWNINYLDND). One copy of the 2-gamma repeat lies at 240-286 (ASKYILYNLQDTNRVLDVYNSQIANGTHVIVDSYHGNTNQQWIINLI). Positions 256–279 (DVYNSQIANGTHVIVDSYHGNTNQ) are sugar-binding site 2.

Botulinum toxins are produced as progenitor toxins of large molecular sizes of 12S (M toxin) and 16S (L toxin). M toxin consists of a non-toxic, non-hemagglutinin component (NTNHA) and the neurotoxin. L toxin consists of the M toxin and the 3 subcomponents of hemagglutinin (HA). HA is composed of subcomponents of 70, 33, and 17 kDa. The 70 kDa subcomponent undergoes proteolytic processing and is split into HA-55 (also called HA-53 and HA3b) and HA-22-23 (also called HA3a). The stoichiometry of the whole complex has been modeled as one BoNT/C, one NTNHA, three HA-70, six HA-33 and three HA-17.

It is found in the secreted. Its function is as follows. Agglutinates human erythrocytes. The hemagglutinin (HA) component of the progenitor toxin protects the structural integrity of botulinum neurotoxin; may increase internalization of the neurotoxin into the bloodstream of the host. The hemagglutinin (HA) component is involved in binding to the upper small intestine through interactions with glycolipids and glycoproteins containing sialic acid moieties. Binds galactose or oligosaccharides with galactose at their non-reducing end. Binds eukaryotic host mucins; binding is inhibited by N-acetyl-beta-neuraminic acid, N-acetyl-D-galactosamine, galactose, and methyl N-acetyl-beta-neuraminic acid. Binds N-acetyl-beta-neuraminic acid, N-acetyl-D-galactosamine and galactose (but not glucose) via 2 sites. The sequence is that of Main hemagglutinin component type C from Clostridium botulinum C (Clostridium botulinum C bacteriophage).